The sequence spans 407 residues: Argininosuccinate synthase (407 aa).

Residues 16–24 and Ala-44 contribute to the ATP site; that span reads AYSGGLDTS. Positions 96 and 101 each coordinate L-citrulline. An ATP-binding site is contributed by Gly-126. Thr-128, Asn-132, and Asp-133 together coordinate L-aspartate. Asn-132 contributes to the L-citrulline binding site. Residues Arg-136, Ser-185, Ser-194, Glu-270, and Tyr-282 each coordinate L-citrulline.

It belongs to the argininosuccinate synthase family. Type 1 subfamily. In terms of assembly, homotetramer.

It localises to the cytoplasm. It carries out the reaction L-citrulline + L-aspartate + ATP = 2-(N(omega)-L-arginino)succinate + AMP + diphosphate + H(+). It functions in the pathway amino-acid biosynthesis; L-arginine biosynthesis; L-arginine from L-ornithine and carbamoyl phosphate: step 2/3. In Shewanella loihica (strain ATCC BAA-1088 / PV-4), this protein is Argininosuccinate synthase.